The following is a 739-amino-acid chain: NAD(P)H-quinone oxidoreductase subunit 5, chloroplastic (739 aa).

15 helical membrane-spanning segments follow: residues 9–29 (WVIP…LLLV), 40–60 (WAFP…NLSI), 89–109 (IDPL…VVLI), 144–164 (LIQI…LIGF), 184–204 (IGDF…GSFE), 219–239 (NGVH…GAVA), 258–278 (TPIS…FLVA), 280–300 (LLPI…IGVI), 327–347 (LGYT…FHLI), 354–374 (ALLF…VGYS), 396–416 (TTFL…CFWS), 425–445 (WLYS…TAFY), 542–562 (TMLF…SIGI), 597–617 (FFIN…IAFL), and 719–739 (LFLY…WSLI).

This sequence belongs to the complex I subunit 5 family. NDH is composed of at least 16 different subunits, 5 of which are encoded in the nucleus.

The protein localises to the plastid. Its subcellular location is the chloroplast thylakoid membrane. The catalysed reaction is a plastoquinone + NADH + (n+1) H(+)(in) = a plastoquinol + NAD(+) + n H(+)(out). It carries out the reaction a plastoquinone + NADPH + (n+1) H(+)(in) = a plastoquinol + NADP(+) + n H(+)(out). In terms of biological role, NDH shuttles electrons from NAD(P)H:plastoquinone, via FMN and iron-sulfur (Fe-S) centers, to quinones in the photosynthetic chain and possibly in a chloroplast respiratory chain. The immediate electron acceptor for the enzyme in this species is believed to be plastoquinone. Couples the redox reaction to proton translocation, and thus conserves the redox energy in a proton gradient. The chain is NAD(P)H-quinone oxidoreductase subunit 5, chloroplastic (ndhF) from Chloranthus spicatus (Chulantree).